Reading from the N-terminus, the 185-residue chain is Ribosome-recycling factor (185 aa).

It belongs to the RRF family.

Its subcellular location is the cytoplasm. Functionally, responsible for the release of ribosomes from messenger RNA at the termination of protein biosynthesis. May increase the efficiency of translation by recycling ribosomes from one round of translation to another. The protein is Ribosome-recycling factor of Wolbachia sp. subsp. Drosophila simulans (strain wRi).